The sequence spans 485 residues: ATP synthase subunit beta (485 aa).

Residues 1–20 form a disordered region; sequence MSTTKTTKMTVKTGSKGTSG. 170-177 contributes to the ATP binding site; it reads GGAGVGKT.

Belongs to the ATPase alpha/beta chains family. In terms of assembly, F-type ATPases have 2 components, CF(1) - the catalytic core - and CF(0) - the membrane proton channel. CF(1) has five subunits: alpha(3), beta(3), gamma(1), delta(1), epsilon(1). CF(0) has three main subunits: a(1), b(2) and c(9-12). The alpha and beta chains form an alternating ring which encloses part of the gamma chain. CF(1) is attached to CF(0) by a central stalk formed by the gamma and epsilon chains, while a peripheral stalk is formed by the delta and b chains.

It is found in the cell membrane. The catalysed reaction is ATP + H2O + 4 H(+)(in) = ADP + phosphate + 5 H(+)(out). Functionally, produces ATP from ADP in the presence of a proton gradient across the membrane. The catalytic sites are hosted primarily by the beta subunits. The sequence is that of ATP synthase subunit beta from Mycobacterium leprae (strain TN).